Here is a 458-residue protein sequence, read N- to C-terminus: Phosphoglucosamine mutase (458 aa).

The active-site Phosphoserine intermediate is the Ser-109. Residues Ser-109, Asp-251, Asp-253, and Asp-255 each contribute to the Mg(2+) site. Ser-109 carries the phosphoserine modification.

This sequence belongs to the phosphohexose mutase family. Mg(2+) serves as cofactor. Activated by phosphorylation.

It carries out the reaction alpha-D-glucosamine 1-phosphate = D-glucosamine 6-phosphate. Its function is as follows. Catalyzes the conversion of glucosamine-6-phosphate to glucosamine-1-phosphate. This is Phosphoglucosamine mutase from Myxococcus xanthus (strain DK1622).